Consider the following 736-residue polypeptide: Segment polarity protein dishevelled homolog DVL-2 (736 aa).

A DIX domain is found at 1-82; it reads MAETKVIYHL…RVVSWLASSE (82 aa). Residues 79–241 are disordered; the sequence is ASSEGSQPDS…PRLERTSSFS (163 aa). Positions 100 to 114 are enriched in pro residues; sequence EPPPPVPPPIPPPPA. Positions 149–160 are enriched in basic and acidic residues; that stretch reads MRRDRVRRRESS. Residues 181-195 show a composition bias toward low complexity; it reads ESSSTLLTSEIETSI. The span at 205 to 217 shows a compositional bias: polar residues; that stretch reads SRFSSSTEQSSAS. The segment covering 219–231 has biased composition (basic residues); that stretch reads LLKRHRRRRKQRP. One can recognise a PDZ domain in the interval 254–326; it reads TVTLNMEKYN…NDDAVRVLRD (73 aa). Positions 327–427 are interaction with custos; sequence IVHKPGPIVL…LASVVKVMAS (101 aa). Residues 428-502 enclose the DEP domain; the sequence is PESGLEVRDR…SEQCYYIFGD (75 aa). 2 stretches are compositionally biased toward low complexity: residues 574-593 and 616-629; these read MGSAGSQHSEGSRSSGSNRS and KSGSGSESEYSTRS. Residues 574–664 form a disordered region; sequence MGSAGSQHSE…HPPSVHSYAA (91 aa).

It belongs to the DSH family. In terms of assembly, can form homomultimers. Interacts with prickle1. Interacts (via PDZ domain) with ccdc88c/dal and dact1-B/dpr. Interacts (via DIX domain) with ARP/Axin-related protein and dact1-A/frodo. Interacts with sdc4, possibly via fz7. Interacts directly (via DEP domain) with efnb1/ephrin-B1 and indirectly with the phosphorylated ephrin receptors ephb1 and ephb2, via association with SH domain-containing adapters. May interact with lrrc6. Interacts with custos (via NLS1 and NLS2); the interaction is negatively regulated by Wnt stimulation. In terms of processing, phosphorylated. Phosphorylation is controlled by frizzled proteins, correlates with the onset of embryo dorsalizing events and is higher in the dorsal half of early cleavage embryos. Phosphorylated on tyrosine residues in response to association with efnb1/ephrin-B1. In terms of tissue distribution, expressed equally in both animal-vegetal and dorsal-ventral directions of the early blastula. Becomes enriched on the dorsal side of the embryo after cortical rotation. Expressed along the anterior margin of eye field of neurulae (stage 16 embryos) and in the anterolateral crescent that borders the eye field. Continues to be expressed in the optic cup at stage 26. Expressed in the central nervous system throughout the early tailbud stage including the entire hindbrain.

It is found in the cytoplasm. The protein resides in the cytoplasmic vesicle. The protein localises to the cell projection. Its subcellular location is the cilium. It localises to the nucleus. It is found in the cell membrane. Involved in at least 2 independent signaling cascades, controlling cell fate via canonical Wnt signaling and cell polarity via a planar cell polarity (PCP) cascade. Acts synergistically with dal/dapple-like to activate Wnt signaling, stabilizing ctnnb1/beta-catenin and leading to dorsal axis formation. Also prevents degradation of ctnnb1/beta-catenin by displacing gsk3 from a complex with ARP/Axin-related protein. Has an additional role in anterior-posterior (A/P) axis formation, specifying different neuroectodermal cell fates along the A/P axis in a dose-dependent manner by activating several early patterning genes. In the PCP pathway, required at the cell membrane for PCP-mediated neural and mesodermal convergent extension during gastrulation and subsequent neural tube closure, acting to activate jnk. Also involved in blastopore closure and archenteron elongation during early, but not late, gastrulation. Associates with ephrin receptors and ligands and acts as part of a downstream PCP pathway to mediate ephrin-mediated cell repulsion via activation of rhoa. Required for efnb1/ephrin-B1-driven movement of non-retinal progenitor cells into the retina during eye field formation. Patterns the hindbrain. Required for ciliogenesis. Controls the docking of basal bodies to the apical plasma membrane; mediates the activation, but not localization of rhoa at the apical surface of ciliated cells during basal body docking. Furthermore, required for the association of basal bodies with membrane-bound vesicles and the vesicle-trafficking protein exoc4/sec8, and this association is in turn required for basal body docking. Once basal bodies are docked, required for the planar polarization of basal bodies that underlies ciliary beating and the directional fluid flow across ciliated epithelia. The sequence is that of Segment polarity protein dishevelled homolog DVL-2 (dvl2) from Xenopus laevis (African clawed frog).